The sequence spans 333 residues: 4-hydroxyproline epimerase (333 aa).

Residue C90 is the Proton acceptor of the active site. Substrate is bound by residues 91–92 and D249; that span reads GH. The Proton donor role is filled by C253. 254–255 is a binding site for substrate; that stretch reads GT.

Belongs to the proline racemase family. In terms of assembly, homodimer.

The enzyme catalyses trans-4-hydroxy-L-proline = cis-4-hydroxy-D-proline. Allows intracellular utilization of 4-hydroxyproline, one of the major constituents of host collagen, by converting 4-hydroxy-L-proline to 4-hydroxy-D-proline, which can be further metabolized by intracellular 4-hydroxy-D-proline oxidases. Strong B-cell mitogen. Plays an important role in the regulation of intra- and extracellular amino acid pools, allowing the bacterium to profit from host precursors and enzymatic pathways. The sequence is that of 4-hydroxyproline epimerase from Brucella canis (strain ATCC 23365 / NCTC 10854 / RM-666).